Reading from the N-terminus, the 243-residue chain is UPF0246 protein gbs2036 (243 aa).

Belongs to the UPF0246 family.

This Streptococcus agalactiae serotype III (strain NEM316) protein is UPF0246 protein gbs2036.